The sequence spans 232 residues: tRNA (guanine-N(1)-)-methyltransferase (232 aa).

Residues G112 and 132-137 (IGDYIL) each bind S-adenosyl-L-methionine.

It belongs to the RNA methyltransferase TrmD family. Homodimer.

It is found in the cytoplasm. The enzyme catalyses guanosine(37) in tRNA + S-adenosyl-L-methionine = N(1)-methylguanosine(37) in tRNA + S-adenosyl-L-homocysteine + H(+). Functionally, specifically methylates guanosine-37 in various tRNAs. This is tRNA (guanine-N(1)-)-methyltransferase from Methylacidiphilum infernorum (isolate V4) (Methylokorus infernorum (strain V4)).